Consider the following 536-residue polypeptide: REST corepressor 2 (536 aa).

The segment at 1–44 is disordered; that stretch reads MERSGSGVLSRSRAKTVTNGNSQHSEEESSDEEHPNDSMIRVGG. The span at 24–36 shows a compositional bias: basic and acidic residues; it reads HSEEESSDEEHPN. An ELM2 domain is found at 38 to 123; the sequence is SMIRVGGDYQ…KSLADLANFT (86 aa). The 52-residue stretch at 124–175 folds into the SANT 1 domain; it reads PFPDEWTVEDKVLFEQAFSFHGKSFHRIQQMLPDKMITSLVKYYYSWKKTRT. The tract at residues 179–264 is disordered; sequence VMDRQARKLL…RARRRPPKGM (86 aa). The span at 197–211 shows a compositional bias: acidic residues; sequence NDEIEEGDPGSDSDF. Positions 249 to 262 are enriched in basic residues; sequence YRHHPLRARRRPPK. The stretch at 283-315 forms a coiled coil; it reads VTIRQLDTQLVSLKRQVQKIKQTNSVLRNNLGD. Residues 328 to 379 form the SANT 2 domain; the sequence is KINSRWTTEEQLLAVQAVRRYGKDFAAIADVIGNKTVAQVSSFFVSYRRRFN. The interval 389 to 536 is disordered; it reads AEQEVQGSSG…GLKVESPQSH (148 aa). A compositionally biased stretch (polar residues) spans 391–406; that stretch reads QEVQGSSGRTVNTELN. A compositionally biased stretch (low complexity) spans 422-449; sequence SPPHSDSPLPSSEGSASGNHSSAQSSPP. The span at 450–476 shows a compositional bias: pro residues; sequence LTQPPPLLRPAPPSAPPSLLRQPPPLQ.

Belongs to the CoREST family.

The protein resides in the nucleus. In terms of biological role, may act as a component of a corepressor complex that represses transcription. This Danio rerio (Zebrafish) protein is REST corepressor 2 (rcor2).